The primary structure comprises 1224 residues: DNA-directed RNA polymerase subunit beta' (1224 aa).

Cys-60, Cys-62, Cys-75, and Cys-78 together coordinate Zn(2+). Mg(2+)-binding residues include Asp-449, Asp-451, and Asp-453. Positions 819, 893, 900, and 903 each coordinate Zn(2+).

The protein belongs to the RNA polymerase beta' chain family. As to quaternary structure, the RNAP catalytic core consists of 2 alpha, 1 beta, 1 beta' and 1 omega subunit. When a sigma factor is associated with the core the holoenzyme is formed, which can initiate transcription. Mg(2+) is required as a cofactor. It depends on Zn(2+) as a cofactor.

The enzyme catalyses RNA(n) + a ribonucleoside 5'-triphosphate = RNA(n+1) + diphosphate. DNA-dependent RNA polymerase catalyzes the transcription of DNA into RNA using the four ribonucleoside triphosphates as substrates. This Lactobacillus johnsonii (strain CNCM I-12250 / La1 / NCC 533) protein is DNA-directed RNA polymerase subunit beta'.